Reading from the N-terminus, the 877-residue chain is Alanine--tRNA ligase (877 aa).

Zn(2+) is bound by residues His-567, His-571, Cys-669, and His-673.

It belongs to the class-II aminoacyl-tRNA synthetase family. Zn(2+) is required as a cofactor.

It localises to the cytoplasm. The enzyme catalyses tRNA(Ala) + L-alanine + ATP = L-alanyl-tRNA(Ala) + AMP + diphosphate. In terms of biological role, catalyzes the attachment of alanine to tRNA(Ala) in a two-step reaction: alanine is first activated by ATP to form Ala-AMP and then transferred to the acceptor end of tRNA(Ala). Also edits incorrectly charged Ser-tRNA(Ala) and Gly-tRNA(Ala) via its editing domain. The sequence is that of Alanine--tRNA ligase from Rickettsia bellii (strain RML369-C).